A 59-amino-acid polypeptide reads, in one-letter code: Potassium channel toxin alpha-KTx 1.12 (59 aa).

The first 22 residues, Met1–Ala22, serve as a signal peptide directing secretion. The residue at position 23 (Gln23) is a Pyrrolidone carboxylic acid. 3 disulfide bridges follow: Cys29–Cys50, Cys35–Cys55, and Cys39–Cys57. The interval Gly48–Cys55 is interaction with Ca(2+)-activated K(+) channels.

This sequence belongs to the short scorpion toxin superfamily. Potassium channel inhibitor family. Alpha-KTx 01 subfamily. Expressed by the venom gland.

Its subcellular location is the secreted. Potent selective inhibitor of high conductance (maxi-K), different medium and small conductance calcium-activated potassium channels (KCa1.1/KCNMA1 and others), as well as a voltage-dependent potassium channel (Kv1.3/KCNA3&gt;Kv1.2/KCNA2&gt;Kv1.6/KCNA3&gt;&gt;Shaker/Sh). It blocks channel activity by a simple bimolecular inhibition process. In terms of biological role, has a pH-specific antimicrobial activity against bacteria (B.subtilis, E.coli and S.aureus) and the fungus C.albicans. In Leiurus hebraeus (Hebrew deathstalker scorpion), this protein is Potassium channel toxin alpha-KTx 1.12.